The following is a 657-amino-acid chain: MESLKRAWNQLVYTFSTEDRYAEYTPQGSTNVVGGEPFDTSNASRIQLNEFVDGAEVGGNDGVSECLLAWRHIDSWCSEHNPDLYATLSSPCTNNDIMWAEKDLAITFPAAVRASLRTHDGQEDVESMQGASGLIYGLKLMGLEEVVIMTRTWRNVAANLQRQMARMEQQQRAKSSSELPQTVTPQAVKQKGYGKVDNQDYHANPHLQKDISQNYNKQFKLDKLPKQGSIPPLAIQPVYAHPGWIPLVTDHAGNHIGVDLAPGPKGKYAQVILFGREFDTKFVVADNWGDFLLGFVNDLEKGNWLLVDNTDDYLNGEGDLVFVDHATRGPILNYLAVLKKRSWEKWQSTKPTQPLTSASVASFSTSSSVVNRPTPADAAGQARKTQGYSPMVPGASSNESVSFIPDSDVIMEESNLTQTDASSKGTTKPATPNPMTAPTVIRVSTPGSPSAAAEAPEPPKKATPPKAAKETKTPTVTKESTPASDANVDTELDSKNTETNEDTRATNTAHSMAPTVSSAITDLTAIDEPVATAGKPKDTEKTDDAKDVHEANKQDLTKANEAEAEENAVEPKDNEVSADSKVKARAESKSDHDSKTNNIPEKKVPQVTAKALPESDRGQASDAASTKSDKKAKPAEDPKEHDLKIEKLNEDFETVAL.

Disordered regions lie at residues 168–193, 366–402, and 416–657; these read EQQQRAKSSSELPQTVTPQAVKQKGY, SSSVVNRPTPADAAGQARKTQGYSPMVPGASSNESVS, and LTQT…TVAL. Residues 174–187 show a composition bias toward polar residues; that stretch reads KSSSELPQTVTPQA. The segment covering 416–436 has biased composition (polar residues); that stretch reads LTQTDASSKGTTKPATPNPMT. 2 stretches are compositionally biased toward low complexity: residues 444-455 and 473-482; these read STPGSPSAAAEA and TPTVTKESTP. The segment covering 492-504 has biased composition (basic and acidic residues); that stretch reads LDSKNTETNEDTR. Residues 505-521 show a composition bias toward polar residues; the sequence is ATNTAHSMAPTVSSAIT. Basic and acidic residues-rich tracts occupy residues 535–561, 569–604, and 627–650; these read KPKDTEKTDDAKDVHEANKQDLTKANE, VEPKDNEVSADSKVKARAESKSDHDSKTNNIPEKKV, and KSDKKAKPAEDPKEHDLKIEKLNE.

This sequence belongs to the KNR4/SMI1 family.

The sequence is that of KNR4/SMI1 homolog from Eremothecium gossypii (strain ATCC 10895 / CBS 109.51 / FGSC 9923 / NRRL Y-1056) (Yeast).